The primary structure comprises 2912 residues: MGRRRRLCLQLYFLWLGCVVLWAQGTAGQPQPPPPKPPRPQPPPQQVRSATAGSEGGFLAPEYREEGAAVASRVRRRGQQDVLRGPNVCGSRFHSYCCPGWKTLPGGNQCIVPICRNSCGDGFCSRPNMCTCSSGQISSTCGSKSIQQCSVRCMNGGTCADDHCQCQKGYIGTYCGQPVCENGCQNGGRCIGPNRCACVYGFTGPQCERDYRTGPCFTQVNNQMCQGQLTGIVCTKTLCCATIGRAWGHPCEMCPAQPQPCRRGFIPNIRTGACQDVDECQAIPGICQGGNCINTVGSFECRCPAGHKQSETTQKCEDIDECSIIPGICETGECSNTVGSYFCVCPRGYVTSTDGSRCIDQRTGMCFSGLVNGRCAQELPGRMTKMQCCCEPGRCWGIGTIPEACPVRGSEEYRRLCMDGLPMGGIPGSAGSRPGGTGGNGFAPSGNGNGYGPGGTGFIPIPGGNGFSPGVGGAGVGAGGQGPIITGLTILNQTIDICKHHANLCLNGRCIPTVSSYRCECNMGYKQDANGDCIDVDECTSNPCTNGDCVNTPGSYYCKCHAGFQRTPTKQACIDIDECIQNGVLCKNGRCVNTDGSFQCICNAGFELTTDGKNCVDHDECTTTNMCLNGMCINEDGSFKCICKPGFVLAPNGRYCTDVDECQTPGICMNGHCINSEGSFRCDCPPGLAVGMDGRVCVDTHMRSTCYGGIKKGVCVRPFPGAVTKSECCCANPDYGFGEPCQPCPAKNSAEFHGLCSSGVGITVDGRDINECALDPDICANGICENLRGSYRCNCNSGYEPDASGRNCIDIDECLVNRLLCDNGLCRNTPGSYSCTCPPGYVFRTETETCEDINECESNPCVNGACRNNLGSFNCECSPGSKLSSTGLICIDSLKGTCWLNIQDSRCEVNINGATLKSECCATLGAAWGSPCERCELDTACPRGLARIKGVTCEDVNECEVFPGVCPNGRCVNSKGSFHCECPEGLTLDGTGRVCLDIRMEQCYLKWDEDECIHPVPGKFRMDACCCAVGAAWGTECEECPKPGTKEYETLCPRGAGFANRGDVLTGRPFYKDINECKAFPGMCTYGKCRNTIGSFKCRCNSGFALDMEERNCTDIDECRISPDLCGSGICVNTPGSFECECFEGYESGFMMMKNCMDIDECERNPLLCRGGTCVNTEGSFQCDCPLGHELSPSREDCVDINECSLSDNLCRNGKCVNMIGTYQCSCNPGYQATPDRQGCTDIDECMIMNGGCDTQCTNSEGSYECSCSEGYALMPDGRSCADIDECENNPDICDGGQCTNIPGEYRCLCYDGFMASMDMKTCIDVNECDLNSNICMFGECENTKGSFICHCQLGYSVKKGTTGCTDVDECEIGAHNCDMHASCLNIPGSFKCSCREGWIGNGIKCIDLDECSNGTHQCSINAQCVNTPGSYRCACSEGFTGDGFTCSDVDECAENINLCENGQCLNVPGAYRCECEMGFTPASDSRSCQDIDECSFQNICVFGTCNNLPGMFHCICDDGYELDRTGGNCTDIDECADPINCVNGLCVNTPGRYECNCPPDFQLNPTGVGCVDNRVGNCYLKFGPRGDGSLSCNTEIGVGVSRSSCCCSLGKAWGNPCETCPPVNSTEYYTLCPGGEGFRPNPITIILEDIDECQELPGLCQGGNCINTFGSFQCECPQGYYLSEDTRICEDIDECFAHPGVCGPGTCYNTLGNYTCICPPEYMQVNGGHNCMDMRKSFCYRSYNGTTCENELPFNVTKRMCCCTYNVGKAWNKPCEPCPTPGTADFKTICGNIPGFTFDIHTGKAVDIDECKEIPGICANGVCINQIGSFRCECPTGFSYNDLLLVCEDIDECSNGDNLCQRNADCINSPGSYRCECAAGFKLSPNGACVDRNECLEIPNVCSHGLCVDLQGSYQCICHNGFKASQDQTMCMDVDECERHPCGNGTCKNTVGSYNCLCYPGFELTHNNDCLDIDECSSFFGQVCRNGRCFNEIGSFKCLCNEGYELTPDGKNCIDTNECVALPGSCSPGTCQNLEGSFRCICPPGYEVKSENCIDINECDEDPNICLFGSCTNTPGGFQCLCPPGFVLSDNGRRCFDTRQSFCFTNFENGKCSVPKAFNTTKAKCCCSKMPGEGWGDPCELCPKDDEVAFQDLCPYGHGTVPSLHDTREDVNECLESPGICSNGQCINTDGSFRCECPMGYNLDYTGVRCVDTDECSIGNPCGNGTCTNVIGSFECNCNEGFEPGPMMNCEDINECAQNPLLCAFRCMNTFGSYECTCPIGYALREDQKMCKDLDECAEGLHDCESRGMMCKNLIGTFMCICPPGMARRPDGEGCVDENECRTKPGICENGRCVNIIGSYRCECNEGFQSSSSGTECLDNRQGLCFAEVLQTICQMASSSRNLVTKSECCCDGGRGWGHQCELCPLPGTAQYKKICPHGPGYTTDGRDIDECKVMPNLCTNGQCINTMGSFRCFCKVGYTTDISGTSCIDLDECSQSPKPCNYICKNTEGSYQCSCPRGYVLQEDGKTCKDLDECQTKQHNCQFLCVNTLGGFTCKCPPGFTQHHTACIDNNECGSQPSLCGAKGICQNTPGSFSCECQRGFSLDATGLNCEDVDECDGNHRCQHGCQNILGGYRCGCPQGYIQHYQWNQCVDENECSNPNACGSASCYNTLGSYKCACPSGFSFDQFSSACHDVNECSSSKNPCNYGCSNTEGGYLCGCPPGYYRVGQGHCVSGMGFNKGQYLSLDTEVDEENALSPEACYECKINGYSKKDSRQKRSIHEPDPTAVEQISLESVDMDSPVNMKFNLSHLGSKEHILELRPAIQPLNNHIRYVISQGNDDSVFRIHQRNGLSYLHTAKKKLMPGTYTLEITSIPLYKKKELKKLEESNEDDYLLGELGEALRMRLQIQLY.

A signal peptide spans 1–28; it reads MGRRRRLCLQLYFLWLGCVVLWAQGTAG. A disordered region spans residues 27–52; sequence AGQPQPPPPKPPRPQPPPQQVRSATA. The propeptide occupies 29–77; it reads QPQPPPPKPPRPQPPPQQVRSATAGSEGGFLAPEYREEGAAVASRVRRR. The segment covering 30–45 has biased composition (pro residues); that stretch reads PQPPPPKPPRPQPPPQ. EGF-like domains lie at 111–142, 145–176, and 176–208; these read IVPI…STCG, SIQQ…TYCG, and GQPV…PQCE. Disulfide bonds link C115/C124, C119/C130, C132/C141, C149/C159, C153/C164, C166/C175, C180/C190, C184/C196, and C198/C207. Residues 149–359 form an interaction with MFAP4 region; it reads CSVRCMNGGT…VTSTDGSRCI (211 aa). The region spanning 214-266 is the TB 1 domain; the sequence is GPCFTQVNNQMCQGQLTGIVCTKTLCCATIGRAWGHPCEMCPAQPQPCRRGFI. The region spanning 276 to 317 is the EGF-like 4; calcium-binding domain; the sequence is DVDECQAIPGICQGGNCINTVGSFECRCPAGHKQSETTQKCE. 6 cysteine pairs are disulfide-bonded: C280–C292, C287–C301, C303–C316, C322–C334, C329–C343, and C345–C358. O-linked (Glc) serine glycosylation is present at S298. Residues 318 to 359 form the EGF-like 5; calcium-binding domain; the sequence is DIDECSIIPGICETGECSNTVGSYFCVCPRGYVTSTDGSRCI. O-linked (Glc) serine glycosylation occurs at S340. In terms of domain architecture, TB 2 spans 364 to 417; sequence GMCFSGLVNGRCAQELPGRMTKMQCCCEPGRCWGIGTIPEACPVRGSEEYRRLC. N-linked (GlcNAc...) asparagine glycosylation occurs at N492. Residues 494 to 534 enclose the EGF-like 6 domain; that stretch reads TIDICKHHANLCLNGRCIPTVSSYRCECNMGYKQDANGDCI. 15 disulfides stabilise this stretch: C498-C510, C505-C519, C521-C533, C539-C549, C544-C558, C560-C573, C579-C591, C586-C600, C602-C615, C621-C632, C627-C641, C643-C656, C662-C673, C668-C682, and C684-C697. O-linked (Glc) serine glycosylation occurs at S516. An EGF-like 7; calcium-binding domain is found at 535–574; the sequence is DVDECTSNPCTNGDCVNTPGSYYCKCHAGFQRTPTKQACI. S555 carries O-linked (Glc) serine glycosylation. The EGF-like 8; calcium-binding domain occupies 575–616; sequence DIDECIQNGVLCKNGRCVNTDGSFQCICNAGFELTTDGKNCV. S597 carries O-linked (Glc) serine glycosylation. Positions 617–657 constitute an EGF-like 9; calcium-binding domain; sequence DHDECTTTNMCLNGMCINEDGSFKCICKPGFVLAPNGRYCT. Residue S638 is glycosylated (O-linked (Glc) serine). The EGF-like 10; calcium-binding domain occupies 658–698; sequence DVDECQTPGICMNGHCINSEGSFRCDCPPGLAVGMDGRVCV. S679 carries O-linked (Glc) serine glycosylation. Residues 704–756 enclose the TB 3 domain; it reads STCYGGIKKGVCVRPFPGAVTKSECCCANPDYGFGEPCQPCPAKNSAEFHGLC. An EGF-like 11; calcium-binding domain is found at 768-809; it reads DINECALDPDICANGICENLRGSYRCNCNSGYEPDASGRNCI. Intrachain disulfides connect C772-C784, C779-C793, C795-C808, C814-C826, C821-C835, C837-C850, C856-C866, C861-C875, and C877-C890. An EGF-like 12; calcium-binding domain is found at 810–851; it reads DIDECLVNRLLCDNGLCRNTPGSYSCTCPPGYVFRTETETCE. Residue S832 is glycosylated (O-linked (Glc) serine). An EGF-like 13; calcium-binding domain is found at 852–891; sequence DINECESNPCVNGACRNNLGSFNCECSPGSKLSSTGLICI. S872 is a glycosylation site (O-linked (Glc) serine). Residues 896–947 enclose the TB 4 domain; the sequence is GTCWLNIQDSRCEVNINGATLKSECCATLGAAWGSPCERCELDTACPRGLAR. The EGF-like 14; calcium-binding domain occupies 955–996; it reads DVNECEVFPGVCPNGRCVNSKGSFHCECPEGLTLDGTGRVCL. Intrachain disulfides connect C959–C971, C966–C980, and C982–C995. A glycan (O-linked (Glc) serine) is linked at S977. Residues 1001–1052 enclose the TB 5 domain; the sequence is EQCYLKWDEDECIHPVPGKFRMDACCCAVGAAWGTECEECPKPGTKEYETLC. An EGF-like 15; calcium-binding domain is found at 1073 to 1114; it reads DINECKAFPGMCTYGKCRNTIGSFKCRCNSGFALDMEERNCT. 36 disulfides stabilise this stretch: C1077-C1089, C1084-C1098, C1100-C1113, C1119-C1131, C1126-C1140, C1142-C1156, C1162-C1174, C1169-C1183, C1185-C1198, C1204-C1216, C1211-C1225, C1227-C1240, C1246-C1257, C1253-C1266, C1268-C1281, C1287-C1299, C1294-C1308, C1310-C1323, C1329-C1341, C1336-C1350, C1352-C1365, C1371-C1384, C1378-C1393, C1395-C1406, C1412-C1425, C1419-C1434, C1436-C1447, C1453-C1465, C1460-C1474, C1476-C1489, C1495-C1506, C1501-C1515, C1517-C1530, C1536-C1547, C1542-C1556, and C1558-C1571. Residue S1095 is glycosylated (O-linked (Glc) serine). N-linked (GlcNAc...) asparagine glycosylation occurs at N1112. The EGF-like 16; calcium-binding domain occupies 1115–1157; the sequence is DIDECRISPDLCGSGICVNTPGSFECECFEGYESGFMMMKNCM. The EGF-like 17; calcium-binding domain maps to 1158-1199; it reads DIDECERNPLLCRGGTCVNTEGSFQCDCPLGHELSPSREDCV. The O-linked (Glc) serine glycan is linked to S1180. One can recognise an EGF-like 18; calcium-binding domain in the interval 1200–1241; it reads DINECSLSDNLCRNGKCVNMIGTYQCSCNPGYQATPDRQGCT. Residue T1222 is glycosylated (O-linked (Glc) threonine). The EGF-like 19; calcium-binding domain occupies 1242 to 1282; that stretch reads DIDECMIMNGGCDTQCTNSEGSYECSCSEGYALMPDGRSCA. The O-linked (Glc) serine glycan is linked to S1263. The 42-residue stretch at 1283–1324 folds into the EGF-like 20; calcium-binding domain; the sequence is DIDECENNPDICDGGQCTNIPGEYRCLCYDGFMASMDMKTCI. Residues 1325-1366 form the EGF-like 21; calcium-binding domain; it reads DVNECDLNSNICMFGECENTKGSFICHCQLGYSVKKGTTGCT. An O-linked (Glc) serine glycan is attached at S1347. One can recognise an EGF-like 22; calcium-binding domain in the interval 1367-1407; sequence DVDECEIGAHNCDMHASCLNIPGSFKCSCREGWIGNGIKCI. S1390 is a glycosylation site (O-linked (Glc) serine). An EGF-like 23; calcium-binding domain is found at 1408-1448; sequence DLDECSNGTHQCSINAQCVNTPGSYRCACSEGFTGDGFTCS. N1414 is a glycosylation site (N-linked (GlcNAc...) asparagine). Positions 1449–1490 constitute an EGF-like 24; calcium-binding domain; sequence DVDECAENINLCENGQCLNVPGAYRCECEMGFTPASDSRSCQ. The EGF-like 25; calcium-binding domain maps to 1491-1531; it reads DIDECSFQNICVFGTCNNLPGMFHCICDDGYELDRTGGNCT. A glycan (N-linked (GlcNAc...) asparagine) is linked at N1529. Residues 1532 to 1572 form the EGF-like 26; calcium-binding domain; the sequence is DIDECADPINCVNGLCVNTPGRYECNCPPDFQLNPTGVGCV. A TB 6 domain is found at 1577-1633; the sequence is GNCYLKFGPRGDGSLSCNTEIGVGVSRSSCCCSLGKAWGNPCETCPPVNSTEYYTLC. An N-linked (GlcNAc...) asparagine glycan is attached at N1625. The EGF-like 27; calcium-binding domain occupies 1650–1691; that stretch reads DIDECQELPGLCQGGNCINTFGSFQCECPQGYYLSEDTRICE. Cystine bridges form between C1654–C1666, C1661–C1675, C1677–C1690, C1696–C1708, C1703–C1717, and C1719–C1732. O-linked (Glc) serine glycosylation occurs at S1672. Residues 1692–1733 enclose the EGF-like 28; calcium-binding domain; sequence DIDECFAHPGVCGPGTCYNTLGNYTCICPPEYMQVNGGHNCM. N1714 is a glycosylation site (N-linked (GlcNAc...) asparagine). The tract at residues 1735-2171 is interaction with MFAP4; it reads MRKSFCYRSY…VPSLHDTRED (437 aa). The TB 7 domain maps to 1738-1791; that stretch reads SFCYRSYNGTTCENELPFNVTKRMCCCTYNVGKAWNKPCEPCPTPGTADFKTIC. N-linked (GlcNAc...) asparagine glycosylation is found at N1745 and N1756. In terms of domain architecture, EGF-like 29; calcium-binding spans 1808–1849; sequence DIDECKEIPGICANGVCINQIGSFRCECPTGFSYNDLLLVCE. 21 disulfides stabilise this stretch: C1812–C1824, C1819–C1833, C1835–C1848, C1854–C1867, C1861–C1876, C1878–C1890, C1896–C1908, C1903–C1917, C1919–C1932, C1938–C1948, C1943–C1957, C1959–C1971, C1977–C1990, C1985–C1999, C2001–C2014, C2020–C2032, C2027–C2041, C2043–C2054, C2060–C2072, C2067–C2081, and C2083–C2096. The 42-residue stretch at 1850–1891 folds into the EGF-like 30; calcium-binding domain; that stretch reads DIDECSNGDNLCQRNADCINSPGSYRCECAAGFKLSPNGACV. O-linked (Glc) serine glycosylation is present at S1873. The 42-residue stretch at 1892-1933 folds into the EGF-like 31; calcium-binding domain; sequence DRNECLEIPNVCSHGLCVDLQGSYQCICHNGFKASQDQTMCM. An EGF-like 32; calcium-binding domain is found at 1934 to 1972; that stretch reads DVDECERHPCGNGTCKNTVGSYNCLCYPGFELTHNNDCL. N-linked (GlcNAc...) asparagine glycosylation occurs at N1945. S1954 carries O-linked (Glc) serine glycosylation. The region spanning 1973–2015 is the EGF-like 33; calcium-binding domain; sequence DIDECSSFFGQVCRNGRCFNEIGSFKCLCNEGYELTPDGKNCI. O-linked (Glc) serine glycosylation occurs at S1996. In terms of domain architecture, EGF-like 34; calcium-binding spans 2016–2055; that stretch reads DTNECVALPGSCSPGTCQNLEGSFRCICPPGYEVKSENCI. The EGF-like 35; calcium-binding domain occupies 2056–2097; sequence DINECDEDPNICLFGSCTNTPGGFQCLCPPGFVLSDNGRRCF. The TB 8 domain maps to 2102-2155; the sequence is SFCFTNFENGKCSVPKAFNTTKAKCCCSKMPGEGWGDPCELCPKDDEVAFQDLC. The N-linked (GlcNAc...) asparagine glycan is linked to N2120. An EGF-like 36; calcium-binding domain is found at 2171–2212; the sequence is DVNECLESPGICSNGQCINTDGSFRCECPMGYNLDYTGVRCV. Intrachain disulfides connect C2175–C2187, C2182–C2196, C2198–C2211, C2217–C2228, C2223–C2237, C2239–C2251, C2257–C2268, C2264–C2277, C2279–C2292, C2298–C2312, C2305–C2321, C2323–C2336, C2342–C2354, C2349–C2363, and C2365–C2378. A glycan (O-linked (Glc) serine) is linked at S2193. The EGF-like 37; calcium-binding domain occupies 2213 to 2252; sequence DTDECSIGNPCGNGTCTNVIGSFECNCNEGFEPGPMMNCE. Residue N2225 is glycosylated (N-linked (GlcNAc...) asparagine). An EGF-like 38; calcium-binding domain is found at 2253–2293; the sequence is DINECAQNPLLCAFRCMNTFGSYECTCPIGYALREDQKMCK. O-linked (Glc) serine glycosylation is present at S2274. The EGF-like 39; calcium-binding domain maps to 2294–2337; that stretch reads DLDECAEGLHDCESRGMMCKNLIGTFMCICPPGMARRPDGEGCV. Positions 2338 to 2379 constitute an EGF-like 40; calcium-binding domain; the sequence is DENECRTKPGICENGRCVNIIGSYRCECNEGFQSSSSGTECL. Residue S2360 is glycosylated (O-linked (Glc) serine). Positions 2384 to 2437 constitute a TB 9 domain; the sequence is GLCFAEVLQTICQMASSSRNLVTKSECCCDGGRGWGHQCELCPLPGTAQYKKIC. The 42-residue stretch at 2449 to 2490 folds into the EGF-like 41; calcium-binding domain; that stretch reads DIDECKVMPNLCTNGQCINTMGSFRCFCKVGYTTDISGTSCI. Cystine bridges form between C2453–C2465, C2460–C2474, C2476–C2489, C2495–C2506, C2502–C2515, C2517–C2530, C2536–C2547, C2543–C2556, C2558–C2569, C2575–C2588, C2582–C2597, C2599–C2612, C2618–C2628, C2624–C2637, C2639–C2652, C2658–C2669, C2664–C2678, C2680–C2693, C2699–C2710, C2706–C2719, and C2721–C2733. A glycan (O-linked (Glc) serine) is linked at S2471. The EGF-like 42; calcium-binding domain maps to 2491–2531; it reads DLDECSQSPKPCNYICKNTEGSYQCSCPRGYVLQEDGKTCK. The O-linked (Glc) serine glycan is linked to S2512. An EGF-like 43; calcium-binding domain is found at 2532-2570; it reads DLDECQTKQHNCQFLCVNTLGGFTCKCPPGFTQHHTACI. Positions 2571–2613 constitute an EGF-like 44; calcium-binding domain; it reads DNNECGSQPSLCGAKGICQNTPGSFSCECQRGFSLDATGLNCE. A glycan (O-linked (Glc) serine) is linked at S2594. An EGF-like 45; calcium-binding domain is found at 2614 to 2653; it reads DVDECDGNHRCQHGCQNILGGYRCGCPQGYIQHYQWNQCV. The EGF-like 46; calcium-binding domain occupies 2654 to 2694; it reads DENECSNPNACGSASCYNTLGSYKCACPSGFSFDQFSSACH. O-linked (Glc) serine glycosylation is present at S2675. One can recognise an EGF-like 47; calcium-binding domain in the interval 2695–2734; the sequence is DVNECSSSKNPCNYGCSNTEGGYLCGCPPGYYRVGQGHCV. N2808 carries N-linked (GlcNAc...) asparagine glycosylation.

Belongs to the fibrillin family. Interacts with BMP2, BMP4, BMP7, BMP10 and GDF5. Interacts with MFAP2 and MFAP5. Interacts with ADAMTSL5. Interacts with MFAP4. Post-translationally, N-glycosylated. In terms of processing, O-glycosylated on serine residues by POGLUT2 and POGLUT3. Almost exclusively expressed in placenta. Expressed at much lower level in other tissues. Expressed in fetal eye (18 weeks)in the retinal pigment epithelium (RPE), the choroid, Bruch's membrane and in the sclera. Not expressed in the neural retina. In terms of tissue distribution, present at high level in cytotrophoblasts as compared with syncytiotrophoblasts at 8-9 weeks of pregnancy (at protein level). Levels in the serum increase during pregnancy (at protein level).

Its subcellular location is the secreted. The protein resides in the extracellular space. It localises to the extracellular matrix. Fibrillins are structural components of 10-12 nm extracellular calcium-binding microfibrils, which occur either in association with elastin or in elastin-free bundles. Fibrillin-2-containing microfibrils regulate the early process of elastic fiber assembly. Regulates osteoblast maturation by controlling TGF-beta bioavailability and calibrating TGF-beta and BMP levels, respectively. Its function is as follows. Hormone secreted by trophoblasts that promotes trophoblast invasiveness. Has glucogenic activity: is able to increase plasma glucose levels. The protein is Fibrillin-2 of Homo sapiens (Human).